A 60-amino-acid polypeptide reads, in one-letter code: Short neurotoxin 1 (60 aa).

4 disulfides stabilise this stretch: Cys3–Cys22, Cys17–Cys39, Cys41–Cys52, and Cys53–Cys58.

This sequence belongs to the three-finger toxin family. Short-chain subfamily. Type I alpha-neurotoxin sub-subfamily. In terms of tissue distribution, expressed by the venom gland.

It is found in the secreted. Functionally, binds to muscle nicotinic acetylcholine receptor (nAChR) and inhibit acetylcholine from binding to the receptor, thereby impairing neuromuscular transmission. This chain is Short neurotoxin 1, found in Dendroaspis viridis (Western green mamba).